A 208-amino-acid chain; its full sequence is Negative modulator of initiation of replication (208 aa).

Positions A115–V116 are interaction with DNA.

It belongs to the SeqA family. In terms of assembly, homodimer. Polymerizes to form helical filaments.

The protein resides in the cytoplasm. Its function is as follows. Negative regulator of replication initiation, which contributes to regulation of DNA replication and ensures that replication initiation occurs exactly once per chromosome per cell cycle. Binds to pairs of hemimethylated GATC sequences in the oriC region, thus preventing assembly of replication proteins and re-initiation at newly replicated origins. Repression is relieved when the region becomes fully methylated. The chain is Negative modulator of initiation of replication from Shewanella frigidimarina (strain NCIMB 400).